Consider the following 150-residue polypeptide: UPF0506 protein SJCHGC02381 (150 aa).

The first 18 residues, 1–18 (MNTCIQLLILCLVTVINS), serve as a signal peptide directing secretion. Residues Asn-20, Asn-24, Asn-32, Asn-36, Asn-48, Asn-52, Asn-64, and Asn-110 are each glycosylated (N-linked (GlcNAc...) asparagine). Residues 22-49 (TDNSTENTIKNETENATETELPETFENE) form a disordered region. Residues 36–49 (NATETELPETFENE) show a composition bias toward acidic residues. 3 cysteine pairs are disulfide-bonded: Cys-116-Cys-130, Cys-123-Cys-134, and Cys-129-Cys-139.

It belongs to the UPF0506 family.

The protein localises to the secreted. The sequence is that of UPF0506 protein SJCHGC02381 from Schistosoma japonicum (Blood fluke).